We begin with the raw amino-acid sequence, 290 residues long: L-cysteine S-thiosulfotransferase subunit SoxA (290 aa).

Residues 1–26 (MPRFTKTKGTLAATALGLALAGAAFA) form the signal peptide. Zn(2+) contacts are provided by D78 and D81. In terms of domain architecture, Cytochrome c spans 78–171 (DDFDNPAMVF…DMLSLISLQS (94 aa)). Heme c contacts are provided by C106, C109, H110, and C143. H190 lines the Zn(2+) pocket. Positions 206, 209, and 210 each coordinate heme c. R247 contacts substrate. Residue C251 coordinates heme c. Residue C251 is the Cysteine persulfide intermediate of the active site. Residue D266 coordinates Zn(2+).

This sequence belongs to the SoxA family. Heterodimer of SoxA and SoxX. Heme c is required as a cofactor. It depends on Zn(2+) as a cofactor. Post-translationally, cysteine persulfide at Cys-251.

The protein localises to the periplasm. It carries out the reaction L-cysteinyl-[SoxY protein] + thiosulfate + 2 Fe(III)-[cytochrome c] = S-sulfosulfanyl-L-cysteinyl-[SoxY protein] + 2 Fe(II)-[cytochrome c] + 2 H(+). The enzyme catalyses S-sulfanyl-L-cysteinyl-[SoxY protein] + thiosulfate + 2 Fe(III)-[cytochrome c] = S-(2-sulfodisulfanyl)-L-cysteinyl-[SoxY protein] + 2 Fe(II)-[cytochrome c] + 2 H(+). C-type diheme cytochrome, which is part of the SoxAX cytochrome complex involved in sulfur oxidation. The SoxAX complex catalyzes the formation of a heterodisulfide bond between the conserved cysteine residue on a sulfur carrier SoxYZ complex subunit SoxY and thiosulfate or other inorganic sulfur substrates. This leads to the liberation of two electrons, which may be transferred from the SoxAX complex to another cytochrome c that then channels them into the respiratory electron transport chain. Some electrons may be used for reductive CO(2) fixation. The protein is L-cysteine S-thiosulfotransferase subunit SoxA of Paracoccus pantotrophus (Thiosphaera pantotropha).